A 538-amino-acid chain; its full sequence is Chaperonin GroEL 1 (538 aa).

ATP-binding positions include 29–32 (TLGP), 86–90 (DGTTT), Gly413, 478–480 (NAA), and Asp494.

The protein belongs to the chaperonin (HSP60) family. In terms of assembly, forms a cylinder of 14 subunits composed of two heptameric rings stacked back-to-back. Interacts with the co-chaperonin GroES.

It is found in the cytoplasm. The catalysed reaction is ATP + H2O + a folded polypeptide = ADP + phosphate + an unfolded polypeptide.. Functionally, together with its co-chaperonin GroES, plays an essential role in assisting protein folding. The GroEL-GroES system forms a nano-cage that allows encapsulation of the non-native substrate proteins and provides a physical environment optimized to promote and accelerate protein folding. The protein is Chaperonin GroEL 1 of Corynebacterium glutamicum (strain R).